The following is a 135-amino-acid chain: Probable histone H2A.8 (135 aa).

It belongs to the histone H2A family. As to quaternary structure, the nucleosome is a histone octamer containing two molecules each of H2A, H2B, H3 and H4 assembled in one H3-H4 heterotetramer and two H2A-H2B heterodimers. The octamer wraps approximately 147 bp of DNA.

Its subcellular location is the nucleus. It localises to the chromosome. Its function is as follows. Core component of nucleosome. Nucleosomes wrap and compact DNA into chromatin, limiting DNA accessibility to the cellular machineries which require DNA as a template. Histones thereby play a central role in transcription regulation, DNA repair, DNA replication and chromosomal stability. DNA accessibility is regulated via a complex set of post-translational modifications of histones, also called histone code, and nucleosome remodeling. The sequence is that of Probable histone H2A.8 from Oryza sativa subsp. indica (Rice).